We begin with the raw amino-acid sequence, 243 residues long: Probable fructoselysine utilization operon transcriptional repressor (243 aa).

The HTH gntR-type domain maps to 10–78 (QLLYATVRQR…QGKGTFVQSQ (69 aa)). Residues 38-57 (ENELCTQYNVSRITIRKAIS) constitute a DNA-binding region (H-T-H motif).

It participates in carbohydrate metabolism; fructoselysine degradation [regulation]. May regulate the transcription of the frlABCDR operon, involved in the utilization of fructoselysine and psicoselysine. This is Probable fructoselysine utilization operon transcriptional repressor (frlR) from Escherichia coli O157:H7.